We begin with the raw amino-acid sequence, 337 residues long: Transaldolase (337 aa).

Residues 1-10 carry the Nuclear localization signal motif; the sequence is MSGSPVKRQR. Lys115 is subject to N6-acetyllysine. Residue Lys142 is the Schiff-base intermediate with substrate of the active site. Lys219 is modified (N6-acetyllysine). A phosphoserine mark is found at Ser237 and Ser256. An N6-acetyllysine mark is found at Lys269, Lys286, and Lys321.

The protein belongs to the transaldolase family. Type 1 subfamily. As to quaternary structure, homodimer. Interacts with KPNA1 and KPNA4.

The protein resides in the nucleus. The protein localises to the cytoplasm. The catalysed reaction is D-sedoheptulose 7-phosphate + D-glyceraldehyde 3-phosphate = D-erythrose 4-phosphate + beta-D-fructose 6-phosphate. The protein operates within carbohydrate degradation; pentose phosphate pathway; D-glyceraldehyde 3-phosphate and beta-D-fructose 6-phosphate from D-ribose 5-phosphate and D-xylulose 5-phosphate (non-oxidative stage): step 2/3. In terms of biological role, catalyzes the rate-limiting step of the non-oxidative phase in the pentose phosphate pathway. Catalyzes the reversible conversion of sedheptulose-7-phosphate and D-glyceraldehyde 3-phosphate into erythrose-4-phosphate and beta-D-fructose 6-phosphate. In Cricetulus griseus (Chinese hamster), this protein is Transaldolase (TALDO1).